Here is a 132-residue protein sequence, read N- to C-terminus: Ig kappa chain V-III region MOPC 321 (132 aa).

An N-terminal signal peptide occupies residues methionine 1–glycine 20. Residues aspartate 21–cysteine 43 form a framework-1 region. Cysteine 43 and cysteine 112 are joined by a disulfide. The tract at residues arginine 44–residue 58 is complementarity-determining-1. Residues tryptophan 59 to tyrosine 73 are framework-2. Residues arginine 74–serine 80 are complementarity-determining-2. The segment at glycine 81 to cysteine 112 is framework-3. Residues residue 113–threonine 121 form a complementarity-determining-3 region. Residues phenylalanine 122 to lysine 131 are framework-4.

This Mus musculus (Mouse) protein is Ig kappa chain V-III region MOPC 321.